The sequence spans 162 residues: MERTIDPLTLPYRPCVGIVLINREGLIFAGQRIDSPVPAWQMPQGGIDEGEKPREAALRELWEETGIPAERVEFVAKAPDWVTYDLPPELLGRVWGGKYRGQRQKWFLYRYLGTDEEVGIGTDHAEFSCWRWIGAEEMVAAIVPFKRAVYEEVVATFRPHLA.

The 145-residue stretch at 11–155 folds into the Nudix hydrolase domain; that stretch reads PYRPCVGIVL…KRAVYEEVVA (145 aa). The Nudix box motif lies at 45–66; sequence GGIDEGEKPREAALRELWEETG.

This sequence belongs to the Nudix hydrolase family. RppH subfamily. The cofactor is a divalent metal cation.

In terms of biological role, accelerates the degradation of transcripts by removing pyrophosphate from the 5'-end of triphosphorylated RNA, leading to a more labile monophosphorylated state that can stimulate subsequent ribonuclease cleavage. The chain is RNA pyrophosphohydrolase from Cereibacter sphaeroides (strain ATCC 17023 / DSM 158 / JCM 6121 / CCUG 31486 / LMG 2827 / NBRC 12203 / NCIMB 8253 / ATH 2.4.1.) (Rhodobacter sphaeroides).